The following is a 514-amino-acid chain: 2,3-bisphosphoglycerate-independent phosphoglycerate mutase (514 aa).

The Mn(2+) site is built by aspartate 14 and serine 64. Serine 64 functions as the Phosphoserine intermediate in the catalytic mechanism. Substrate-binding positions include histidine 125, 155–156 (RD), arginine 187, arginine 193, 263–266 (RADR), and lysine 336. Aspartate 403, histidine 407, aspartate 444, histidine 445, and histidine 463 together coordinate Mn(2+).

This sequence belongs to the BPG-independent phosphoglycerate mutase family. In terms of assembly, monomer. The cofactor is Mn(2+).

It carries out the reaction (2R)-2-phosphoglycerate = (2R)-3-phosphoglycerate. The protein operates within carbohydrate degradation; glycolysis; pyruvate from D-glyceraldehyde 3-phosphate: step 3/5. In terms of biological role, catalyzes the interconversion of 2-phosphoglycerate and 3-phosphoglycerate. This chain is 2,3-bisphosphoglycerate-independent phosphoglycerate mutase, found in Shewanella baltica (strain OS195).